The sequence spans 1031 residues: Zinc finger protein 445 (1031 aa).

Residues 1–43 form a disordered region; sequence MPPGRWHAAYPAQAQSSRERGRLQTVKKEEEDESYTPVQAARP. Over residues 17–29 the composition is skewed to basic and acidic residues; sequence SRERGRLQTVKKE. Residue K28 forms a Glycyl lysine isopeptide (Lys-Gly) (interchain with G-Cter in SUMO1) linkage. Residues 55–137 enclose the SCAN box domain; it reads RQLFRQLRYH…ALLEELQRDL (83 aa). Positions 234–304 constitute a KRAB domain; sequence MTFKDVEVTF…NMQAAQPKGN (71 aa). Residues K317, K374, K375, and K399 each participate in a glycyl lysine isopeptide (Lys-Gly) (interchain with G-Cter in SUMO2) cross-link. 3 C2H2-type zinc fingers span residues 485-507, 513-535, and 541-563; these read FKCSDCGRTFSHSSHLAYHQRLH, FKCRVCGKAFRWSSNCARHEKIH, and YKCDLCEKAFRRLSAYRLHRETH. Residue K567 forms a Glycyl lysine isopeptide (Lys-Gly) (interchain with G-Cter in SUMO2) linkage. 2 C2H2-type zinc fingers span residues 597-619 and 625-647; these read FDCSQCRKSFHCKSYVLEHQRIH and YKCTKCRKTFRWRSNFTRHMRLH. A Glycyl lysine isopeptide (Lys-Gly) (interchain with G-Cter in SUMO2) cross-link involves residue K654. C2H2-type zinc fingers lie at residues 681-703 and 709-731; these read FLCQQCGKTFTRKKTLVDHQRIH and YQCSDCGKDFAYRSAFIVHKKKH. Residues K736 and K758 each participate in a glycyl lysine isopeptide (Lys-Gly) (interchain with G-Cter in SUMO2) cross-link. 5 C2H2-type zinc fingers span residues 762–784, 790–812, 840–862, 868–890, and 896–918; these read YKCSQCGKAFRNHSFLLIHQRVH, YKCRECGKAFRWSSNLYRHQRIH, FWCQECGKTFTRKRTLLDHKGIH, YKCNLCGKSYDRNYRLVNHQRIH, and FKCQWCGKEFIGRHTLSSHQRKH. Positions 911 to 939 are disordered; sequence LSSHQRKHTRAAQAERSPPARSSSQDTKL. Residues K938, K956, and K975 each participate in a glycyl lysine isopeptide (Lys-Gly) (interchain with G-Cter in SUMO2) cross-link. 2 consecutive C2H2-type zinc fingers follow at residues 978–1000 and 1006–1028; these read HKCSICGKTFNKSSQLISHKRFH and FKCSKCGKTFRWSSNLARHMKNH.

It belongs to the krueppel C2H2-type zinc-finger protein family.

The protein localises to the nucleus. Transcription regulator required to maintain maternal and paternal gene imprinting, a process by which gene expression is restricted in a parent of origin-specific manner by epigenetic modification of genomic DNA and chromatin, including DNA methylation. Acts by controlling DNA methylation during the earliest multicellular stages of development at multiple imprinting control regions (ICRs). Acts together with ZFP57, but seems to be the major factor in human early embryonic imprinting maintenance. In contrast, in mice, ZFP57 plays the predominant role in imprinting maintenance. This is Zinc finger protein 445 from Homo sapiens (Human).